The sequence spans 261 residues: Indole-3-glycerol phosphate synthase (261 aa).

The protein belongs to the TrpC family.

It catalyses the reaction 1-(2-carboxyphenylamino)-1-deoxy-D-ribulose 5-phosphate + H(+) = (1S,2R)-1-C-(indol-3-yl)glycerol 3-phosphate + CO2 + H2O. It functions in the pathway amino-acid biosynthesis; L-tryptophan biosynthesis; L-tryptophan from chorismate: step 4/5. The polypeptide is Indole-3-glycerol phosphate synthase (Burkholderia pseudomallei (strain 1106a)).